A 151-amino-acid chain; its full sequence is Small ribosomal subunit protein uS19 (151 aa).

It belongs to the universal ribosomal protein uS19 family.

Protein S19 forms a complex with S13 that binds strongly to the 16S ribosomal RNA. The sequence is that of Small ribosomal subunit protein uS19 (rps19) from Thermoplasma acidophilum (strain ATCC 25905 / DSM 1728 / JCM 9062 / NBRC 15155 / AMRC-C165).